The chain runs to 356 residues: CMP-sialic acid transporter 2 (356 aa).

Positions 1–24 are enriched in basic and acidic residues; that stretch reads MEYRRVKDQESYDVVSQKDIESPG. The segment at 1-44 is disordered; it reads MEYRRVKDQESYDVVSQKDIESPGERSLSSTSATSSLSTAGASK. The Cytoplasmic segment spans residues 1 to 52; sequence MEYRRVKDQESYDVVSQKDIESPGERSLSSTSATSSLSTAGASKGKNSWKLK. Residues 27-44 show a composition bias toward low complexity; that stretch reads SLSSTSATSSLSTAGASK. The helical transmembrane segment at 53-73 threads the bilayer; the sequence is SIVTLALTLLTSSQAILIVWS. The Lumenal portion of the chain corresponds to 74–82; it reads KRAGKYEYS. A helical membrane pass occupies residues 83–103; it reads VTTANFSVEALKCLLSLIALY. Over 104-125 the chain is Cytoplasmic; it reads RTWNSQGVTEDNRLSTSFDEVS. A helical membrane pass occupies residues 126–146; the sequence is VYPIPAILYMVKNLLQYYIFA. The Lumenal portion of the chain corresponds to 147–149; sequence YVD. Residues 150–172 traverse the membrane as a helical segment; it reads APAYQILKNLNIISTGVLYRIIL. Topologically, residues 173–175 are cytoplasmic; it reads KKK. Residues 176-196 traverse the membrane as a helical segment; the sequence is LSEIQWAAFILLCAGCTTAQL. The Lumenal segment spans residues 197 to 211; sequence NPSSDHVLQTPIQGW. A helical membrane pass occupies residues 212–232; sequence VMAIVMALLSGFAGVYTEAII. At 233–239 the chain is on the cytoplasmic side; sequence KKRPSRN. The helical transmembrane segment at 240-260 threads the bilayer; that stretch reads INVQNFWLYIFGMLFNLVAIC. Topologically, residues 261 to 277 are lumenal; the sequence is VQDFDAVMNKGFFHGYS. The helical transmembrane segment at 278–298 threads the bilayer; sequence FITVLMILNHALSGIAVSMVM. Residues 299–314 lie on the Cytoplasmic side of the membrane; that stretch reads KYADNIVKVYSTSVAM. The chain crosses the membrane as a helical span at residues 315 to 335; sequence LLTAVVSVFLFGFHLSLAFFL. Residues 336–356 lie on the Lumenal side of the membrane; it reads GSTVVSVSVYLHSVGKPQPQK.

Belongs to the nucleotide-sugar transporter family. CMP-Sialate:CMP antiporter (TC 2.A.7.12) subfamily. Expressed in roots, leaves and stalks.

It is found in the golgi apparatus membrane. In terms of biological role, sugar transporter involved in the transport of CMP-sialic acid from the cytoplasm into the Golgi. May transport important nucleotide sugars such as CMP-Kdo (2-keto-3-deoxy-D-manno-octulosonic acid) in physiological conditions. This chain is CMP-sialic acid transporter 2, found in Oryza sativa subsp. japonica (Rice).